We begin with the raw amino-acid sequence, 117 residues long: Large ribosomal subunit protein bL20 (117 aa).

Belongs to the bacterial ribosomal protein bL20 family.

Binds directly to 23S ribosomal RNA and is necessary for the in vitro assembly process of the 50S ribosomal subunit. It is not involved in the protein synthesizing functions of that subunit. The chain is Large ribosomal subunit protein bL20 from Pasteurella multocida (strain Pm70).